Here is a 520-residue protein sequence, read N- to C-terminus: Cholesterol side-chain cleavage enzyme, mitochondrial (520 aa).

Residues M1 to G39 constitute a mitochondrion transit peptide. Positions L19–P47 are disordered. Residue C461 participates in heme binding.

The protein belongs to the cytochrome P450 family. In terms of assembly, interacts with FDX1/adrenodoxin. Heme serves as cofactor.

Its subcellular location is the mitochondrion inner membrane. The enzyme catalyses 6 reduced [adrenodoxin] + cholesterol + 3 O2 + 6 H(+) = 4-methylpentanal + pregnenolone + 6 oxidized [adrenodoxin] + 4 H2O. The catalysed reaction is 2 reduced [adrenodoxin] + cholesterol + O2 + 2 H(+) = (22R)-hydroxycholesterol + 2 oxidized [adrenodoxin] + H2O. It carries out the reaction (22R)-hydroxycholesterol + 2 reduced [adrenodoxin] + O2 + 2 H(+) = (20R,22R)-20,22-dihydroxycholesterol + 2 oxidized [adrenodoxin] + H2O. It catalyses the reaction (20R,22R)-20,22-dihydroxycholesterol + 2 reduced [adrenodoxin] + O2 + 2 H(+) = 4-methylpentanal + pregnenolone + 2 oxidized [adrenodoxin] + 2 H2O. It functions in the pathway lipid metabolism; C21-steroid hormone metabolism. Its pathway is steroid metabolism; cholesterol metabolism. In terms of biological role, a cytochrome P450 monooxygenase that catalyzes the side-chain hydroxylation and cleavage of cholesterol to pregnenolone, the precursor of most steroid hormones. Catalyzes three sequential oxidation reactions of cholesterol, namely the hydroxylation at C22 followed with the hydroxylation at C20 to yield 20R,22R-hydroxycholesterol that is further cleaved between C20 and C22 to yield the C21-steroid pregnenolone and 4-methylpentanal. Mechanistically, uses molecular oxygen inserting one oxygen atom into a substrate and reducing the second into a water molecule. Two electrons are provided by NADPH via a two-protein mitochondrial transfer system comprising flavoprotein FDXR (adrenodoxin/ferredoxin reductase) and nonheme iron-sulfur protein FDX1 or FDX2 (adrenodoxin/ferredoxin). The sequence is that of Cholesterol side-chain cleavage enzyme, mitochondrial (CYP11A1) from Equus caballus (Horse).